Reading from the N-terminus, the 434-residue chain is Enolase (434 aa).

Gln165 contacts (2R)-2-phosphoglycerate. Glu207 (proton donor) is an active-site residue. Residues Asp244, Glu291, and Asp318 each coordinate Mg(2+). Lys343, Arg372, Ser373, and Lys394 together coordinate (2R)-2-phosphoglycerate. Lys343 functions as the Proton acceptor in the catalytic mechanism.

This sequence belongs to the enolase family. Requires Mg(2+) as cofactor.

Its subcellular location is the cytoplasm. The protein localises to the secreted. It localises to the cell surface. The enzyme catalyses (2R)-2-phosphoglycerate = phosphoenolpyruvate + H2O. The protein operates within carbohydrate degradation; glycolysis; pyruvate from D-glyceraldehyde 3-phosphate: step 4/5. Its function is as follows. Catalyzes the reversible conversion of 2-phosphoglycerate (2-PG) into phosphoenolpyruvate (PEP). It is essential for the degradation of carbohydrates via glycolysis. The sequence is that of Enolase from Staphylococcus saprophyticus subsp. saprophyticus (strain ATCC 15305 / DSM 20229 / NCIMB 8711 / NCTC 7292 / S-41).